Here is a 255-residue protein sequence, read N- to C-terminus: H-2 class II histocompatibility antigen, E-D alpha chain (255 aa).

Positions 1–25 (MATIGALVLRFFFIAVLMSSQKSWA) are cleaved as a signal peptide. The segment at 26–109 (IKEEHTIIQA…ERSNNTPDAN (84 aa)) is alpha-1. Topologically, residues 26–216 (IKEEHTIIQA…EKTLLPETKE (191 aa)) are extracellular. Residues 110–203 (VAPEVTVLSR…GLEEPLRKTW (94 aa)) form an alpha-2 region. In terms of domain architecture, Ig-like C1-type spans 112–204 (PEVTVLSRSP…LEEPLRKTWE (93 aa)). An intrachain disulfide couples cysteine 132 to cysteine 188. Asparagine 143 carries an N-linked (GlcNAc...) asparagine glycan. The tract at residues 204 to 216 (EFEEKTLLPETKE) is connecting peptide. A helical membrane pass occupies residues 217–242 (NVMCALGLFVGLVGIVVGIILIMKGI). At 243 to 255 (KKRNVVERRQGAL) the chain is on the cytoplasmic side.

This sequence belongs to the MHC class II family.

The protein resides in the membrane. The protein is H-2 class II histocompatibility antigen, E-D alpha chain (H2-Ea) of Mus musculus (Mouse).